Here is a 439-residue protein sequence, read N- to C-terminus: GTPase Der (439 aa).

EngA-type G domains lie at 4 to 169 and 177 to 352; these read AMVS…PQEE and IKIA…EEYN. Residues 10-17, 57-61, 120-123, 183-190, 230-234, and 295-298 contribute to the GTP site; these read GRPNVGKS, DTGGL, NKVD, GKPNVGKS, DTAGI, and NKWD. In terms of domain architecture, KH-like spans 353–437; it reads KRITTGLLNN…PVVISTRKRG (85 aa).

The protein belongs to the TRAFAC class TrmE-Era-EngA-EngB-Septin-like GTPase superfamily. EngA (Der) GTPase family. Associates with the 50S ribosomal subunit.

Its function is as follows. GTPase that plays an essential role in the late steps of ribosome biogenesis. The sequence is that of GTPase Der from Thermoanaerobacter pseudethanolicus (strain ATCC 33223 / 39E) (Clostridium thermohydrosulfuricum).